The following is a 284-amino-acid chain: Tropomyosin (284 aa).

The stretch at 1-284 (MEAIKNKMQA…DQTFAELTGY (284 aa)) forms a coiled coil.

This sequence belongs to the tropomyosin family. As to quaternary structure, homodimer.

Tropomyosin, in association with the troponin complex, plays a central role in the calcium dependent regulation of muscle contraction. This Dermatophagoides pteronyssinus (European house dust mite) protein is Tropomyosin.